The chain runs to 478 residues: Glycogen synthase (478 aa).

Residue K15 participates in ADP-alpha-D-glucose binding.

The protein belongs to the glycosyltransferase 1 family. Bacterial/plant glycogen synthase subfamily.

The enzyme catalyses [(1-&gt;4)-alpha-D-glucosyl](n) + ADP-alpha-D-glucose = [(1-&gt;4)-alpha-D-glucosyl](n+1) + ADP + H(+). It functions in the pathway glycan biosynthesis; glycogen biosynthesis. Synthesizes alpha-1,4-glucan chains using ADP-glucose. The chain is Glycogen synthase from Lactococcus lactis subsp. lactis (strain IL1403) (Streptococcus lactis).